Consider the following 249-residue polypeptide: Aspartate/glutamate leucyltransferase (249 aa).

This sequence belongs to the R-transferase family. Bpt subfamily.

The protein resides in the cytoplasm. It carries out the reaction N-terminal L-glutamyl-[protein] + L-leucyl-tRNA(Leu) = N-terminal L-leucyl-L-glutamyl-[protein] + tRNA(Leu) + H(+). It catalyses the reaction N-terminal L-aspartyl-[protein] + L-leucyl-tRNA(Leu) = N-terminal L-leucyl-L-aspartyl-[protein] + tRNA(Leu) + H(+). Functions in the N-end rule pathway of protein degradation where it conjugates Leu from its aminoacyl-tRNA to the N-termini of proteins containing an N-terminal aspartate or glutamate. The chain is Aspartate/glutamate leucyltransferase from Xanthobacter autotrophicus (strain ATCC BAA-1158 / Py2).